The primary structure comprises 402 residues: DNA replication and repair protein RecF (402 aa).

30–37 lines the ATP pocket; that stretch reads GYNGIGKT.

The protein belongs to the RecF family.

The protein resides in the cytoplasm. Functionally, the RecF protein is involved in DNA metabolism; it is required for DNA replication and normal SOS inducibility. RecF binds preferentially to single-stranded, linear DNA. It also seems to bind ATP. The chain is DNA replication and repair protein RecF from Pseudarthrobacter chlorophenolicus (strain ATCC 700700 / DSM 12829 / CIP 107037 / JCM 12360 / KCTC 9906 / NCIMB 13794 / A6) (Arthrobacter chlorophenolicus).